A 218-amino-acid chain; its full sequence is MSSSKRRIETDVMKLLMSDHQVDLINDSMQEFHVKFLGPKDTPYENGVWRLHVELPDNYPYKSPSIGFVNKIFHPNIDIASGSICLDVINSTWSPLYDLINIVEWMIPGLLKEPNGSDPLNNEAATLQLRDKKLYEEKIKEYIDKYATKEKYQQMFGGDNDSDDSDSGGDLQEEDSDSDEDMDGTGVSSGDDSVDELSEDLSDIDVSDDDDYDEVANQ.

A UBC core domain is found at 3 to 148 (SSKRRIETDV…IKEYIDKYAT (146 aa)). C85 serves as the catalytic Glycyl thioester intermediate. The disordered stretch occupies residues 154–218 (QMFGGDNDSD…DDDYDEVANQ (65 aa)). 2 stretches are compositionally biased toward acidic residues: residues 160–183 (NDSDDSDSGGDLQEEDSDSDEDMD) and 192–218 (DSVDELSEDLSDIDVSDDDDYDEVANQ).

Belongs to the ubiquitin-conjugating enzyme family.

It localises to the cytoplasm. The catalysed reaction is S-ubiquitinyl-[E1 ubiquitin-activating enzyme]-L-cysteine + [E2 ubiquitin-conjugating enzyme]-L-cysteine = [E1 ubiquitin-activating enzyme]-L-cysteine + S-ubiquitinyl-[E2 ubiquitin-conjugating enzyme]-L-cysteine.. It functions in the pathway protein modification; protein ubiquitination. In terms of biological role, catalyzes the covalent attachment of ubiquitin to other proteins. Required for the adaptation to the presence of glucose in the growth medium; mediates the degradation of enzymes involved in gluconeogenesis when cells are shifted to glucose-containing medium. Required for proteasome-dependent catabolite degradation of fructose-1,6-bisphosphatase (FBP1). This chain is Ubiquitin-conjugating enzyme E2-24 kDa (UBC8), found in Saccharomyces cerevisiae (strain ATCC 204508 / S288c) (Baker's yeast).